The following is a 266-amino-acid chain: Ribosomal RNA small subunit methyltransferase A (266 aa).

S-adenosyl-L-methionine is bound by residues asparagine 12, leucine 14, glycine 39, glutamate 61, aspartate 87, and asparagine 107.

The protein belongs to the class I-like SAM-binding methyltransferase superfamily. rRNA adenine N(6)-methyltransferase family. RsmA subfamily.

It localises to the cytoplasm. The enzyme catalyses adenosine(1518)/adenosine(1519) in 16S rRNA + 4 S-adenosyl-L-methionine = N(6)-dimethyladenosine(1518)/N(6)-dimethyladenosine(1519) in 16S rRNA + 4 S-adenosyl-L-homocysteine + 4 H(+). Specifically dimethylates two adjacent adenosines (A1518 and A1519) in the loop of a conserved hairpin near the 3'-end of 16S rRNA in the 30S particle. May play a critical role in biogenesis of 30S subunits. The sequence is that of Ribosomal RNA small subunit methyltransferase A from Nitratidesulfovibrio vulgaris (strain DP4) (Desulfovibrio vulgaris).